The sequence spans 131 residues: Small ribosomal subunit protein uS8 (131 aa).

Belongs to the universal ribosomal protein uS8 family. Part of the 30S ribosomal subunit. Contacts proteins S5 and S12.

Functionally, one of the primary rRNA binding proteins, it binds directly to 16S rRNA central domain where it helps coordinate assembly of the platform of the 30S subunit. The protein is Small ribosomal subunit protein uS8 of Solibacter usitatus (strain Ellin6076).